The primary structure comprises 432 residues: Trigger factor (432 aa).

In terms of domain architecture, PPIase FKBP-type spans 163–248; sequence GDIAVIDFEG…LKALNKKELP (86 aa).

It belongs to the FKBP-type PPIase family. Tig subfamily.

The protein resides in the cytoplasm. The catalysed reaction is [protein]-peptidylproline (omega=180) = [protein]-peptidylproline (omega=0). In terms of biological role, involved in protein export. Acts as a chaperone by maintaining the newly synthesized protein in an open conformation. Functions as a peptidyl-prolyl cis-trans isomerase. This Thermoanaerobacter pseudethanolicus (strain ATCC 33223 / 39E) (Clostridium thermohydrosulfuricum) protein is Trigger factor.